We begin with the raw amino-acid sequence, 182 residues long: CDP-diacylglycerol--glycerol-3-phosphate 3-phosphatidyltransferase (182 aa).

The Cytoplasmic segment spans residues 1 to 12; that stretch reads MQLNIPTWLTLF. The chain crosses the membrane as a helical span at residues 13-37; that stretch reads RVVMIPFFVLAFYLPFKWAPLCCAL. Topologically, residues 38-60 are periplasmic; sequence IFVLAAVTDWFDGFLARRWKQTT. A helical transmembrane segment spans residues 61–81; sequence RFGAFLDPVADKVMVAMALVL. At 82 to 86 the chain is on the cytoplasmic side; the sequence is VAEHF. Residues 87-107 traverse the membrane as a helical segment; sequence HSWWITLPAATMIAREIIISA. At 108–145 the chain is on the periplasmic side; the sequence is LREWMAEIGKRSSVAVSWIGKVKTTAQMLALVTLLWRP. Residues 146–168 form a helical membrane-spanning segment; the sequence is DDIVSGIGIAALYVAAVLTFWSM. Over 169–181 the chain is Cytoplasmic; sequence FQYLYAARHDLFE.

This sequence belongs to the CDP-alcohol phosphatidyltransferase class-I family.

It localises to the cell inner membrane. It carries out the reaction a CDP-1,2-diacyl-sn-glycerol + sn-glycerol 3-phosphate = a 1,2-diacyl-sn-glycero-3-phospho-(1'-sn-glycero-3'-phosphate) + CMP + H(+). It functions in the pathway phospholipid metabolism; phosphatidylglycerol biosynthesis; phosphatidylglycerol from CDP-diacylglycerol: step 1/2. Functionally, catalyzes the conversion of cytidine diphosphate diacylglycerol (CDP-DG) and glycerol 3-phosphate into phosphatidylglycerol. Essential for the synthesis of anionic phospholipids, thereby playing a role in balancing the ratio of zwitterionic and anionic phospholipids, which is thought to be important for normal membrane function. This chain is CDP-diacylglycerol--glycerol-3-phosphate 3-phosphatidyltransferase, found in Sodalis glossinidius (strain morsitans).